An 84-amino-acid polypeptide reads, in one-letter code: Large ribosomal subunit protein bL27 (84 aa).

Residues 1–25 (MAHKKGAGSTKNGRDSKPKMLGVKR) are disordered.

Belongs to the bacterial ribosomal protein bL27 family.

This chain is Large ribosomal subunit protein bL27, found in Dehalococcoides mccartyi (strain ATCC BAA-2266 / KCTC 15142 / 195) (Dehalococcoides ethenogenes (strain 195)).